The sequence spans 598 residues: Elongation factor 4 (598 aa).

Residues 2 to 183 (KHIRNFCIIA…AIIEKIPHPK (182 aa)) enclose the tr-type G domain. GTP-binding positions include 14-19 (DHGKST) and 130-133 (NKVD).

It belongs to the TRAFAC class translation factor GTPase superfamily. Classic translation factor GTPase family. LepA subfamily.

It localises to the cell inner membrane. The catalysed reaction is GTP + H2O = GDP + phosphate + H(+). In terms of biological role, required for accurate and efficient protein synthesis under certain stress conditions. May act as a fidelity factor of the translation reaction, by catalyzing a one-codon backward translocation of tRNAs on improperly translocated ribosomes. Back-translocation proceeds from a post-translocation (POST) complex to a pre-translocation (PRE) complex, thus giving elongation factor G a second chance to translocate the tRNAs correctly. Binds to ribosomes in a GTP-dependent manner. This is Elongation factor 4 from Flavobacterium psychrophilum (strain ATCC 49511 / DSM 21280 / CIP 103535 / JIP02/86).